The sequence spans 168 residues: uncharacterized protein (168 aa).

The N-terminal 29 residues, 1 to 29 (MGWRFPSPSPRQASPVAPLLAAPTAVRSC), are a transit peptide targeting the mitochondrion. A compositionally biased stretch (basic and acidic residues) spans 98–110 (GETKARRAREEGK). The tract at residues 98–152 (GETKARRAREEGKLPSLGNAPAPRRRSVAWPAAEGSCAAPESSPPASEASLPAPE) is disordered. The span at 128-152 (PAAEGSCAAPESSPPASEASLPAPE) shows a compositional bias: low complexity.

Its subcellular location is the mitochondrion. This is an uncharacterized protein from Homo sapiens (Human).